The chain runs to 525 residues: GMP synthase [glutamine-hydrolyzing] (525 aa).

A Glutamine amidotransferase type-1 domain is found at 8–207 (KILILDFGSQ…ALDICGCAAN (200 aa)). C85 serves as the catalytic Nucleophile. Active-site residues include H181 and E183. The GMPS ATP-PPase domain maps to 208 to 400 (WKPSSIIEDA…LGLPYNMLYR (193 aa)). 235-241 (SGGVDSS) contributes to the ATP binding site.

In terms of assembly, homodimer.

The catalysed reaction is XMP + L-glutamine + ATP + H2O = GMP + L-glutamate + AMP + diphosphate + 2 H(+). It functions in the pathway purine metabolism; GMP biosynthesis; GMP from XMP (L-Gln route): step 1/1. Catalyzes the synthesis of GMP from XMP. In Shewanella oneidensis (strain ATCC 700550 / JCM 31522 / CIP 106686 / LMG 19005 / NCIMB 14063 / MR-1), this protein is GMP synthase [glutamine-hydrolyzing].